Consider the following 348-residue polypeptide: Anthranilate phosphoribosyltransferase (348 aa).

5-phospho-alpha-D-ribose 1-diphosphate is bound by residues glycine 81, 84–85 (GD), threonine 89, 91–94 (NIST), 109–117 (KHGNRAMSS), and serine 121. Glycine 81 lines the anthranilate pocket. Residue serine 93 coordinates Mg(2+). An anthranilate-binding site is contributed by asparagine 112. Arginine 167 contacts anthranilate. Mg(2+) is bound by residues aspartate 226 and glutamate 227.

It belongs to the anthranilate phosphoribosyltransferase family. In terms of assembly, homodimer. The cofactor is Mg(2+).

The catalysed reaction is N-(5-phospho-beta-D-ribosyl)anthranilate + diphosphate = 5-phospho-alpha-D-ribose 1-diphosphate + anthranilate. Its pathway is amino-acid biosynthesis; L-tryptophan biosynthesis; L-tryptophan from chorismate: step 2/5. In terms of biological role, catalyzes the transfer of the phosphoribosyl group of 5-phosphorylribose-1-pyrophosphate (PRPP) to anthranilate to yield N-(5'-phosphoribosyl)-anthranilate (PRA). This Thermomicrobium roseum (strain ATCC 27502 / DSM 5159 / P-2) protein is Anthranilate phosphoribosyltransferase.